We begin with the raw amino-acid sequence, 112 residues long: uncharacterized protein (112 aa).

Fe cation-binding residues include Cys-39, Cys-105, and Cys-107.

The protein belongs to the HesB/IscA family. Ycf83 subfamily.

The protein localises to the plastid. It localises to the chloroplast. This is an uncharacterized protein from Galdieria sulphuraria (Red alga).